The sequence spans 384 residues: 1-deoxy-D-xylulose 5-phosphate reductoisomerase (384 aa).

Residues T10, G11, S12, I13, G36, and N123 each contribute to the NADPH site. K124 contributes to the 1-deoxy-D-xylulose 5-phosphate binding site. E125 contacts NADPH. D149 is a binding site for Mn(2+). The 1-deoxy-D-xylulose 5-phosphate site is built by S150, E151, S175, and H198. E151 contributes to the Mn(2+) binding site. Residue G204 coordinates NADPH. 1-deoxy-D-xylulose 5-phosphate is bound by residues S211, N216, K217, and E220. Position 220 (E220) interacts with Mn(2+).

Belongs to the DXR family. Mg(2+) serves as cofactor. Mn(2+) is required as a cofactor.

It catalyses the reaction 2-C-methyl-D-erythritol 4-phosphate + NADP(+) = 1-deoxy-D-xylulose 5-phosphate + NADPH + H(+). Its pathway is isoprenoid biosynthesis; isopentenyl diphosphate biosynthesis via DXP pathway; isopentenyl diphosphate from 1-deoxy-D-xylulose 5-phosphate: step 1/6. Its function is as follows. Catalyzes the NADPH-dependent rearrangement and reduction of 1-deoxy-D-xylulose-5-phosphate (DXP) to 2-C-methyl-D-erythritol 4-phosphate (MEP). The polypeptide is 1-deoxy-D-xylulose 5-phosphate reductoisomerase (Chlorobium phaeovibrioides (strain DSM 265 / 1930) (Prosthecochloris vibrioformis (strain DSM 265))).